A 57-amino-acid polypeptide reads, in one-letter code: uncharacterized protein (57 aa).

The segment at 34-57 (QGKRGETEGQIEISRKAGHPAPAF) is disordered.

This is an uncharacterized protein from Saccharomyces cerevisiae (strain ATCC 204508 / S288c) (Baker's yeast).